Reading from the N-terminus, the 282-residue chain is 2-dehydro-3-deoxyphosphooctonate aldolase (282 aa).

This sequence belongs to the KdsA family.

It localises to the cytoplasm. The enzyme catalyses D-arabinose 5-phosphate + phosphoenolpyruvate + H2O = 3-deoxy-alpha-D-manno-2-octulosonate-8-phosphate + phosphate. Its pathway is carbohydrate biosynthesis; 3-deoxy-D-manno-octulosonate biosynthesis; 3-deoxy-D-manno-octulosonate from D-ribulose 5-phosphate: step 2/3. It functions in the pathway bacterial outer membrane biogenesis; lipopolysaccharide biosynthesis. The chain is 2-dehydro-3-deoxyphosphooctonate aldolase from Bordetella avium (strain 197N).